A 239-amino-acid chain; its full sequence is Fatty acid metabolism regulator protein (239 aa).

An HTH gntR-type domain is found at 6–74; it reads QSPAGFAEEY…HGKPTKVNNF (69 aa). The segment at residues 34–53 is a DNA-binding region (H-T-H motif); sequence ERELSELIGVTRTTLREVLQ.

Homodimer.

It is found in the cytoplasm. Functionally, multifunctional regulator of fatty acid metabolism. This chain is Fatty acid metabolism regulator protein, found in Yersinia pseudotuberculosis serotype O:1b (strain IP 31758).